We begin with the raw amino-acid sequence, 599 residues long: Beta-glucuronidase (599 aa).

Asp160 and Asn407 together coordinate D-glucuronate. Glu408 (proton donor) is an active-site residue. The D-glucuronate site is built by Asn462, Tyr468, Glu501, Trp546, and Lys565. The Nucleophile role is filled by Glu501. The N-K motif signature appears at 563–565; that stretch reads NHK.

Belongs to the glycosyl hydrolase 2 family.

The catalysed reaction is a beta-D-glucuronoside + H2O = D-glucuronate + an alcohol. Inhibited by a set of synthetic compounds like thio-urea derivatives and analogs. Inhibitors of gut microbial beta-glucuronidases are expected to block the reactivation of glucuronidated cancer drugs, and to alleviate drug-induced GI toxicity. Its function is as follows. Displays beta-glucuronidase activity with the artificial substrate p-nitrophenyl-beta-D-glucuronide (PNPG). Is likely capable of scavenging glucuronate from a range of chemically distinct xenobiotic and endobiotic glucuronides present in the gastrointestinal (GI) tract, to be able to utilize these diverse sources of carbon. As part of the GI microbiome, this enzyme would be able to reactivate glucuronide drug conjugates, such reactivated compounds can significantly damage the GI tract. The sequence is that of Beta-glucuronidase from Streptococcus agalactiae serotype V (strain ATCC BAA-611 / 2603 V/R).